A 525-amino-acid polypeptide reads, in one-letter code: Keratin, type II cytoskeletal 4 (525 aa).

A head region spans residues 1–145 (MIARQSSVRG…DPEIQKIRTA (145 aa)). The residue at position 13 (arginine 13) is an Omega-N-methylarginine. The segment at 146 to 181 (EREQIKTLNNKFASFIDKVRFLEQQNKVLETKWNLL) is coil 1A. One can recognise an IF rod domain in the interval 146–459 (EREQIKTLNN…KLLEGEECRM (314 aa)). The interval 182–200 (QQQTTTTSPKSLDPFFETY) is linker 1. A coil 1B region spans residues 201-292 (INALRKNLDT…VLYEAELAQM (92 aa)). Positions 293–316 (QTHVSDTSVVLSMDNNRNLDLDGI) are linker 12. The tract at residues 317-455 (IAEVRAQYED…ATYRKLLEGE (139 aa)) is coil 2. Residues 456–524 (ECRMSGECKS…SSATITKRSP (69 aa)) form a tail region.

Belongs to the intermediate filament family. Heterotetramer of two type I and two type II keratins. Keratin-4 is generally associated with keratin-13. As to expression, expressed in the dorsal and ventral epithelium of the tongue. Highest expression levels are detected in the suprabasal layer with low levels detected in the basal cell layer. Within the suprabasal layer expression is highest in the spinous cells, decreases in the granular cells and is not detected in the stratum corneum.

The chain is Keratin, type II cytoskeletal 4 (Krt4) from Mus musculus (Mouse).